The chain runs to 328 residues: Methionyl-tRNA formyltransferase (328 aa).

Residue 121-124 participates in (6S)-5,6,7,8-tetrahydrofolate binding; sequence SLLP.

The protein belongs to the Fmt family.

It catalyses the reaction L-methionyl-tRNA(fMet) + (6R)-10-formyltetrahydrofolate = N-formyl-L-methionyl-tRNA(fMet) + (6S)-5,6,7,8-tetrahydrofolate + H(+). In terms of biological role, attaches a formyl group to the free amino group of methionyl-tRNA(fMet). The formyl group appears to play a dual role in the initiator identity of N-formylmethionyl-tRNA by promoting its recognition by IF2 and preventing the misappropriation of this tRNA by the elongation apparatus. This chain is Methionyl-tRNA formyltransferase, found in Paraburkholderia xenovorans (strain LB400).